The primary structure comprises 639 residues: MSKVIGIDLGTTNSCVAVMDGKDVRVIENAEGARTTPSQVAFTESGERLVGQPAKRQAVTNPENTLFAIKRLIGRRYSDPTVEKDKGLVPYRIVKGDNGDAWVQTRDEKYAPSQLSAFILQKMKETAEAHLGEPVTQAVITVPAYFNDSQRQATKDAGKIAGLEVLRIINEPTAAALAYGMDKKNTGTIAVFDLGGGTFDVSVLEIGDGVFEVKSTNGDTFLGGEDFDARIIDYLASEFKKEQGIDLRTDRLALQRLKEAAEKAKIELSSSMQTEVNLPFITADQAGPKHLNIKLTRAKLEALVDDLVQRTVEPCRKALADAGIKASEIDEVILVGGMTRMPKVQQVVKDFFGREPHKGVNPDEVVAMGAAIQGGVLKGDVKDVLLLDVTPLSLGIETLGGVFTRLIDRNTTIPTRKSQTFSTAEDSQTAVTIRVFQGEREMAADNKMLGQFDLVGLPSAPRGVPQIEVTFDIDANGIVNVSAKDKATGKEQAIRIQASGGLSDNDIERMVKEAELNAEADRKRKEAVEARNHADGLIHATEKNLKEYGDKIPAEDKAKVEGDLTALKAVLDSEDAESIKAKTDALMQSAMKLGEAAYSAGQSAEGAPHAAGAEASAQSRTDDGVVDADFEEVDEKKGH.

Threonine 198 carries the phosphothreonine; by autocatalysis modification. The tract at residues 597–639 (AYSAGQSAEGAPHAAGAEASAQSRTDDGVVDADFEEVDEKKGH) is disordered. Residues 603–617 (SAEGAPHAAGAEASA) are compositionally biased toward low complexity. The segment covering 624-633 (GVVDADFEEV) has biased composition (acidic residues).

Belongs to the heat shock protein 70 family.

Functionally, acts as a chaperone. The sequence is that of Chaperone protein DnaK from Rhodospirillum rubrum (strain ATCC 11170 / ATH 1.1.1 / DSM 467 / LMG 4362 / NCIMB 8255 / S1).